The following is a 152-amino-acid chain: MEESPIRFADVDINEILKTLPHRYPFLLIDRVKNIRADYSGIGVKNVSIGEPCFQGHFPERPVYPGVLMIEGMAQTAGVIGIKSVEGTEKPRAVYFLTIDKCKFRKPVLPGQTIEYHMRSIGRRKTMWWFHGDAKVDGTIVAEADVGAMLTD.

His-57 is a catalytic residue.

It belongs to the thioester dehydratase family. FabZ subfamily.

It localises to the cytoplasm. It carries out the reaction a (3R)-hydroxyacyl-[ACP] = a (2E)-enoyl-[ACP] + H2O. Functionally, involved in unsaturated fatty acids biosynthesis. Catalyzes the dehydration of short chain beta-hydroxyacyl-ACPs and long chain saturated and unsaturated beta-hydroxyacyl-ACPs. The sequence is that of 3-hydroxyacyl-[acyl-carrier-protein] dehydratase FabZ from Bradyrhizobium sp. (strain BTAi1 / ATCC BAA-1182).